The sequence spans 247 residues: ATP synthase subunit a, chloroplastic (247 aa).

Transmembrane regions (helical) follow at residues 38–58, 95–115, 134–154, 199–219, and 220–240; these read QVLITSWVVIAILLGSATIAV, VPFIGTMFLFIFVSNWSGALL, INTTVALALLTSVAYFYAGLT, LVVVVLVSLVPSVVPIPVMFL, and GLFTSGIQALIFATLAAAYIG.

The protein belongs to the ATPase A chain family. F-type ATPases have 2 components, CF(1) - the catalytic core - and CF(0) - the membrane proton channel. CF(1) has five subunits: alpha(3), beta(3), gamma(1), delta(1), epsilon(1). CF(0) has four main subunits: a, b, b' and c.

It localises to the plastid. Its subcellular location is the chloroplast thylakoid membrane. In terms of biological role, key component of the proton channel; it plays a direct role in the translocation of protons across the membrane. The protein is ATP synthase subunit a, chloroplastic of Buxus microphylla (Littleleaf boxwood).